Here is a 665-residue protein sequence, read N- to C-terminus: Beta-galactosidase LacZ (665 aa).

A substrate-binding site is contributed by Arg-110. Zn(2+) is bound at residue Cys-114. Asn-148 is a binding site for substrate. Residue Glu-149 is the Proton donor of the active site. Zn(2+)-binding residues include Cys-157, Cys-159, and Cys-162. Glu-303 acts as the Nucleophile in catalysis. Substrate-binding positions include Trp-311 and 351 to 354 (EKFH).

This sequence belongs to the glycosyl hydrolase 42 family.

It carries out the reaction Hydrolysis of terminal non-reducing beta-D-galactose residues in beta-D-galactosides.. This chain is Beta-galactosidase LacZ, found in Heyndrickxia coagulans (Weizmannia coagulans).